A 174-amino-acid chain; its full sequence is NADH-quinone oxidoreductase subunit C (174 aa).

The protein belongs to the complex I 30 kDa subunit family. In terms of assembly, NDH-1 is composed of 14 different subunits. Subunits NuoB, C, D, E, F, and G constitute the peripheral sector of the complex.

The protein localises to the cell membrane. It catalyses the reaction a quinone + NADH + 5 H(+)(in) = a quinol + NAD(+) + 4 H(+)(out). In terms of biological role, NDH-1 shuttles electrons from NADH, via FMN and iron-sulfur (Fe-S) centers, to quinones in the respiratory chain. The immediate electron acceptor for the enzyme in this species is believed to be ubiquinone. Couples the redox reaction to proton translocation (for every two electrons transferred, four hydrogen ions are translocated across the cytoplasmic membrane), and thus conserves the redox energy in a proton gradient. The polypeptide is NADH-quinone oxidoreductase subunit C (Roseiflexus sp. (strain RS-1)).